A 277-amino-acid polypeptide reads, in one-letter code: Acetyl-coenzyme A carboxylase carboxyl transferase subunit beta (277 aa).

A CoA carboxyltransferase N-terminal domain is found at 25-277 (LVRRCPVCHT…DLLRLHKGES (253 aa)). Residues cysteine 29, cysteine 32, cysteine 47, and cysteine 50 each contribute to the Zn(2+) site. Residues 29–50 (CPVCHTTFLTDHWEPTRLCPAC) form a C4-type zinc finger.

The protein belongs to the AccD/PCCB family. Acetyl-CoA carboxylase is a heterohexamer composed of biotin carboxyl carrier protein (AccB), biotin carboxylase (AccC) and two subunits each of ACCase subunit alpha (AccA) and ACCase subunit beta (AccD). Requires Zn(2+) as cofactor.

It localises to the cytoplasm. The catalysed reaction is N(6)-carboxybiotinyl-L-lysyl-[protein] + acetyl-CoA = N(6)-biotinyl-L-lysyl-[protein] + malonyl-CoA. It participates in lipid metabolism; malonyl-CoA biosynthesis; malonyl-CoA from acetyl-CoA: step 1/1. Component of the acetyl coenzyme A carboxylase (ACC) complex. Biotin carboxylase (BC) catalyzes the carboxylation of biotin on its carrier protein (BCCP) and then the CO(2) group is transferred by the transcarboxylase to acetyl-CoA to form malonyl-CoA. The polypeptide is Acetyl-coenzyme A carboxylase carboxyl transferase subunit beta (Levilactobacillus brevis (strain ATCC 367 / BCRC 12310 / CIP 105137 / JCM 1170 / LMG 11437 / NCIMB 947 / NCTC 947) (Lactobacillus brevis)).